Here is a 474-residue protein sequence, read N- to C-terminus: PRAME family member 10 (474 aa).

One copy of the LRR 1; degenerate repeat lies at 97-124 (RWKLQVLDLRDVDENFWTIWSGARVLSC). An LRR 2; degenerate repeat occupies 179–203 (HLCCSKVQNYSMPTSSFRNLLERIY). An LRR 3; degenerate repeat occupies 204 to 230 (PDSIQELEVWKKCSLNKTGKFAPYLSQ). An LRR 4; degenerate repeat occupies 231-265 (MSNLRELFLAFGYERELYVSVQWPCIPDLDSPFLC). 5 LRR repeats span residues 266–291 (LYYP…LRYL), 292–323 (KNPL…SQLK), 324–342 (ELRL…PLGV), 348–375 (AATL…ALSH), and 376–400 (CSQL…LLRH).

Belongs to the PRAME family.

This is PRAME family member 10 from Homo sapiens (Human).